A 706-amino-acid polypeptide reads, in one-letter code: Choline transporter-like protein 2 (706 aa).

At 1-33 (MGKDSQNYYGKHGTPQKYDPTFKGPIYNRGCTD) the chain is on the cytoplasmic side. T14 bears the Phosphothreonine mark. Residues 34–54 (VICCVLLFLAIVGYVAVGIIA) traverse the membrane as a helical segment. The Extracellular portion of the chain corresponds to 55 to 232 (WTHGDPRKVI…QIFEDYTVSW (178 aa)). N-linked (GlcNAc...) asparagine glycans are attached at residues N187 and N200. Residues 233–253 (YWIIIGLVIAMVLSLLFIVLL) traverse the membrane as a helical segment. At 254–256 (RFL) the chain is on the cytoplasmic side. The chain crosses the membrane as a helical span at residues 257–277 (AGIMVWVMIVMVILVLGYGIF). Residues 278–315 (HCYMEYSRLRGEAGSDVSLVDLGFQTDLRVYLHLRQTW) are Extracellular-facing. Residues 316-336 (MAFMIILSILEVVIILLLIFL) traverse the membrane as a helical segment. Residues 337–364 (RKRILIAIALIKEASRAVGHVMCSLLYP) are Cytoplasmic-facing. A helical transmembrane segment spans residues 365–385 (LVTFFLLCLCIAYWASTSVFL). Residues 386–454 (STSNTAVYKV…LQIFNAFMFF (69 aa)) are Extracellular-facing. Residue N417 is glycosylated (N-linked (GlcNAc...) asparagine). Residues 455–477 (WLANFVLALGQVTLAGAFASYYW) form a helical membrane-spanning segment. Residues 478–504 (AMRKPDDMPAFPLFSAFGRALRYHTGS) lie on the Cytoplasmic side of the membrane. Residues 505–525 (LAFGSLILAIVQIIRVMLEYL) traverse the membrane as a helical segment. The Extracellular portion of the chain corresponds to 526–563 (DQRLKAAQNKFAKFLMVCLKCCFWCLEKFIKFLNRNAY). A helical transmembrane segment spans residues 564-584 (IMIAIYGTNFCTSARNAFFLL). Residues 585-599 (MRNIIRVAVLDKVTD) lie on the Cytoplasmic side of the membrane. The chain crosses the membrane as a helical span at residues 600–620 (FLFLLGKLLIVGSVGILAFFF). Residues 621–638 (FTHRIRIVQDTAPPLNYY) lie on the Extracellular side of the membrane. A helical transmembrane segment spans residues 639–659 (WVPILTVIIGSYLIAHGFFSV). Over 660-706 (YGMCVDTLFLCFLEDLERNDGSAERPYFMSSTLKKLLNKTNKKVAES) the chain is Cytoplasmic.

This sequence belongs to the CTL (choline transporter-like) family. As to quaternary structure, interacts with COCH. Glycosylated, glycosylation differs from tissue to tissue. The molecular mass of the mature glycosylated protein is highest in kidney, followed by lung, colon and spleen, then brain and tongue. In terms of tissue distribution, expressed at high levels in lung, colon, inner ear and spleen (at protein level). Progressively lower levels in brain, tongue, liver and kidney (at protein level). In the kidney, prominent expression in glomeruli in the lining of Bowman's capsule and on the mesangial cells adjacent to the vessels within the glomerulus (at protein level). Strongly expressed on the membranes of splenocytes and in lung parenchyme (at protein level). Expressed at higher levels than isoform 2 in colon, heart, kidney, lung, cochlea, tongue and muscle, as well as in the inner ear. As to expression, predominantly expressed in brain, liver and spleen.

The protein localises to the cell membrane. It localises to the mitochondrion outer membrane. It carries out the reaction choline(out) + n H(+)(in) = choline(in) + n H(+)(out). The enzyme catalyses ethanolamine(out) + n H(+)(in) = ethanolamine(in) + n H(+)(out). In terms of biological role, choline/H+ antiporter, mainly in mitochodria. Also acts as a low-affinity ethanolamine/H+ antiporter, regulating the supply of extracellular ethanolamine (Etn) for the CDP-Etn pathway, redistribute intracellular Etn and balance the CDP-Cho and CDP-Etn arms of the Kennedy pathway. This is Choline transporter-like protein 2 (Slc44a2) from Mus musculus (Mouse).